A 334-amino-acid polypeptide reads, in one-letter code: Hematopoietic SH2 domain-containing protein (334 aa).

The SH2 domain maps to 34–125; it reads WFHGTISREA…PFGELLTQAC (92 aa). 2 disordered regions span residues 157–181 and 254–280; these read EVQRSSCPPEEASERKPSTTTKGEF and EDSCAATTSLQNPAEPQALRGREATFR. A compositionally biased stretch (polar residues) spans 258-267; sequence AATTSLQNPA.

As to quaternary structure, interacts with FES and TNK2. In terms of processing, may be phosphorylated by FES and ACK1. Predominantly expressed in spleen and thymus. Appears not to be expressed in heart, brain, liver, kidney, embryo, lung and ovary.

Its subcellular location is the cytoplasm. It localises to the mitochondrion. In terms of biological role, adapter protein involved in tyrosine kinase and CD28 signaling. May be a modulator of the apoptotic response through its ability to affect mitochondrial stability. This Mus musculus (Mouse) protein is Hematopoietic SH2 domain-containing protein (Hsh2d).